A 60-amino-acid polypeptide reads, in one-letter code: Small ribosomal subunit protein bS21 (60 aa).

The tract at residues R35–R60 is disordered. The segment covering V43–R60 has biased composition (basic residues).

This sequence belongs to the bacterial ribosomal protein bS21 family.

The chain is Small ribosomal subunit protein bS21 from Clostridium novyi (strain NT).